The chain runs to 301 residues: Probable alpha-L-glutamate ligase (301 aa).

The region spanning 104–287 (LQILARKGIG…VAGKIIEYLE (184 aa)) is the ATP-grasp domain. Residues lysine 141, 178 to 179 (EY), aspartate 187, and 211 to 213 (RSN) contribute to the ATP site. Residues aspartate 248, glutamate 260, and asparagine 262 each contribute to the Mg(2+) site. Mn(2+) is bound by residues aspartate 248, glutamate 260, and asparagine 262.

It belongs to the RimK family. The cofactor is Mg(2+). Mn(2+) is required as a cofactor.

In Picosynechococcus sp. (strain ATCC 27264 / PCC 7002 / PR-6) (Agmenellum quadruplicatum), this protein is Probable alpha-L-glutamate ligase.